The sequence spans 340 residues: tRNA (cytosine(34)-C(5))-methyltransferase, mitochondrial (340 aa).

Residues cysteine 139–lysine 145, glutamate 162, aspartate 193, and aspartate 211 contribute to the S-adenosyl-L-methionine site. The Nucleophile role is filled by cysteine 265.

This sequence belongs to the class I-like SAM-binding methyltransferase superfamily. RsmB/NOP family.

Its subcellular location is the mitochondrion matrix. The enzyme catalyses cytidine(34) in mitochondrial tRNA + S-adenosyl-L-methionine = 5-methylcytidine(34) in mitochondrial tRNA + S-adenosyl-L-homocysteine + H(+). Mitochondrial tRNA methyltransferase that mediates methylation of cytosine to 5-methylcytosine (m5C) at position 34 of mt-tRNA(Met). mt-tRNA(Met) methylation at cytosine(34) takes place at the wobble position of the anticodon and initiates the formation of 5-formylcytosine (f(5)c) at this position. mt-tRNA(Met) containing the f(5)c modification at the wobble position enables recognition of the AUA codon in addition to the AUG codon, expanding codon recognition in mitochondrial translation. The protein is tRNA (cytosine(34)-C(5))-methyltransferase, mitochondrial of Homo sapiens (Human).